The sequence spans 696 residues: Lutropin-choriogonadotropic hormone receptor (696 aa).

Residues 1 to 27 (MRRRSLALRLLLALLLLPPPLPQTLLG) form the signal peptide. The Extracellular portion of the chain corresponds to 28–358 (APCPEPCSCR…AFNPCEDIMG (331 aa)). Asn99 is a glycosylation site (N-linked (GlcNAc...) asparagine). 6 LRR repeats span residues 122-147 (LPRL…IFSS), 149-171 (FNFI…AFQG), 172-196 (MNNE…AFNG), 198-220 (TLIS…AFRG), 221-244 (ARGP…GLES), and 250-271 (ATSS…LLDA). N-linked (GlcNAc...) asparagine glycans are attached at residues Asn174 and Asn195. 3 N-linked (GlcNAc...) asparagine glycosylation sites follow: Asn291, Asn299, and Asn313. Tyr331 carries the sulfotyrosine modification. A helical membrane pass occupies residues 359-386 (YDFLRVLIWLINILAIMGNVTVLFVLLT). Residues 387 to 395 (SHYKLTVPR) are Cytoplasmic-facing. The helical transmembrane segment at 396–418 (FLMCNLSFADFCMGLYLLLIASV) threads the bilayer. The Extracellular portion of the chain corresponds to 419-439 (DAQTKGQYYNHAIDWQTGNGC). Residues Cys439 and Cys514 are joined by a disulfide bond. Residues 440-462 (SVAGFFTVFASELSVYTLTVITL) traverse the membrane as a helical segment. At 463–482 (ERWHTITYAIQLDQKLRLRH) the chain is on the cytoplasmic side. Residues 483-505 (AIPIMLGGWLFSTLIAMLPLVGV) traverse the membrane as a helical segment. Residues 506-525 (SSYMKVSICLPMDVETTLSQ) lie on the Extracellular side of the membrane. Residues 526–547 (VYILTILILNVVAFIIICACYI) traverse the membrane as a helical segment. At 548–570 (KIYFAVQNPELMATNKDTKIAKK) the chain is on the cytoplasmic side. The chain crosses the membrane as a helical span at residues 571–594 (MAVLIFTDFTCMAPISFFAISAAL). Over 595-605 (KVPLITVTNSK) the chain is Extracellular. The chain crosses the membrane as a helical span at residues 606–626 (VLLVLFYPVNSCANPFLYAIF). Topologically, residues 627 to 696 (TKAFRRDFFL…VMDKTCYKDC (70 aa)) are cytoplasmic. S-palmitoyl cysteine attachment occurs at residues Cys643 and Cys644.

This sequence belongs to the G-protein coupled receptor 1 family. FSH/LSH/TSH subfamily. In terms of processing, sulfated.

Its subcellular location is the cell membrane. Functionally, receptor for lutropin-choriogonadotropic hormone. The activity of this receptor is mediated by G proteins which activate adenylate cyclase. In Sus scrofa (Pig), this protein is Lutropin-choriogonadotropic hormone receptor (LHCGR).